Consider the following 78-residue polypeptide: Large ribosomal subunit protein bL28 (78 aa).

It belongs to the bacterial ribosomal protein bL28 family.

The sequence is that of Large ribosomal subunit protein bL28 from Prochlorococcus marinus (strain MIT 9312).